The primary structure comprises 211 residues: External core antigen (211 aa).

Residues 1–19 (MHLFHLCLIILCSCPTVQA) form the signal peptide. Residues 25-27 (GWL) are HBEAG. The segment at 165 to 211 (NAPILSTLPETTVVRRRRPSGRRTPSPRRRRSQSPRRRRSQSPASSC) is disordered. The span at 178–204 (VRRRRPSGRRTPSPRRRRSQSPRRRRS) shows a compositional bias: basic residues. The stretch at 183–189 (PSGRRTP) is one 1; half-length repeat. The tract at residues 183-205 (PSGRRTPSPRRRRSQSPRRRRSQ) is 3 X 8 AA repeats of S-P-R-R-R-R-S-Q. The propeptide occupies 183 to 211 (PSGRRTPSPRRRRSQSPRRRRSQSPASSC). Repeat copies occupy residues 190–197 (SPRRRRSQ) and 198–205 (SPRRRRSQ).

The protein belongs to the orthohepadnavirus precore antigen family. In terms of assembly, homodimerizes. Post-translationally, phosphorylated. In terms of processing, cleaved by host furin.

It localises to the secreted. Its subcellular location is the host nucleus. May regulate immune response to the intracellular capsid in acting as a T-cell tolerogen, by having an immunoregulatory effect which prevents destruction of infected cells by cytotoxic T-cells. This immune regulation may predispose to chronicity during perinatal infections and prevent severe liver injury during adult infections. The protein is External core antigen of Woolly monkey hepatitis B virus (isolate Louisville) (WMHBV).